A 326-amino-acid chain; its full sequence is DNA-directed RNA polymerase subunit alpha (326 aa).

Residues 1 to 231 (MQTNLLKPKI…DQLVVFAALE (231 aa)) form an alpha N-terminal domain (alpha-NTD) region. Residues 247 to 326 (VDPMLMRPVD…ESWPPANLEK (80 aa)) form an alpha C-terminal domain (alpha-CTD) region.

The protein belongs to the RNA polymerase alpha chain family. Homodimer. The RNAP catalytic core consists of 2 alpha, 1 beta, 1 beta' and 1 omega subunit. When a sigma factor is associated with the core the holoenzyme is formed, which can initiate transcription.

The enzyme catalyses RNA(n) + a ribonucleoside 5'-triphosphate = RNA(n+1) + diphosphate. Functionally, DNA-dependent RNA polymerase catalyzes the transcription of DNA into RNA using the four ribonucleoside triphosphates as substrates. The sequence is that of DNA-directed RNA polymerase subunit alpha from Polynucleobacter asymbioticus (strain DSM 18221 / CIP 109841 / QLW-P1DMWA-1) (Polynucleobacter necessarius subsp. asymbioticus).